A 226-amino-acid polypeptide reads, in one-letter code: Elongation factor G (226 aa).

This sequence belongs to the GTP-binding elongation factor family. EF-G/EF-2 subfamily.

It is found in the cytoplasm. In terms of biological role, catalyzes the GTP-dependent ribosomal translocation step during translation elongation. During this step, the ribosome changes from the pre-translocational (PRE) to the post-translocational (POST) state as the newly formed A-site-bound peptidyl-tRNA and P-site-bound deacylated tRNA move to the P and E sites, respectively. Catalyzes the coordinated movement of the two tRNA molecules, the mRNA and conformational changes in the ribosome. In Neisseria gonorrhoeae, this protein is Elongation factor G (fusA).